A 319-amino-acid chain; its full sequence is Taste receptor type 2 member 30 (319 aa).

Position 1 (methionine 1) is a topological domain, extracellular. Residues 2–22 (ITFLPIIFSILIVVIFVIGNF) form a helical membrane-spanning segment. Residues 23 to 46 (ANGFIALVNSIEWVKRQKISFVDQ) lie on the Cytoplasmic side of the membrane. A helical membrane pass occupies residues 47–67 (ILTALAVSRVGLLWVLLLHWY). Over 68–86 (ATQLNPAFYSVEVRITVYN) the chain is Extracellular. Residues 87–107 (VWAVTNHFSSWLATSLSMFYL) traverse the membrane as a helical segment. Residues 108-126 (LKIANFSNLIFLRIKRRVK) lie on the Cytoplasmic side of the membrane. A helical transmembrane segment spans residues 127 to 147 (SVVLVILLGPLLFLVCHLFVI). The Extracellular segment spans residues 148–178 (NMDETIWTKEYEGNMTWKIKLRSAMYHSNMT). N-linked (GlcNAc...) asparagine glycosylation is found at asparagine 161 and asparagine 176. A helical membrane pass occupies residues 179–199 (LTMLANFVPLTLTLISFLLLI). Topologically, residues 200–229 (CSLCKHLKKMQLHGKGSQDPSTKVHIKALQ) are cytoplasmic. A helical membrane pass occupies residues 230–250 (TVTSFLLLCAIYFLSMIISVC). Residues 251-259 (NLGRLEKQP) lie on the Extracellular side of the membrane. The chain crosses the membrane as a helical span at residues 260 to 280 (VFMFCQAIIFSYPSTHPFILI). At 281-319 (LGNKKLKQIFLSVLWHVRYWVKDRSLRLHRFTRAALCKG) the chain is on the cytoplasmic side.

This sequence belongs to the G-protein coupled receptor T2R family.

Its subcellular location is the membrane. Receptor that may play a role in the perception of bitterness and is gustducin-linked. May play a role in sensing the chemical composition of the gastrointestinal content. The activity of this receptor may stimulate alpha gustducin, mediate PLC-beta-2 activation and lead to the gating of TRPM5. The protein is Taste receptor type 2 member 30 (TAS2R30) of Pan troglodytes (Chimpanzee).